The primary structure comprises 918 residues: MDYKNTLNLPKTSFPMRANLVNKEKAFLKEWEEMDLYNYVLEQRKGKPLFVLHDGPPYANGHIHIGTALNKILKDIVVKYKTMRGYRAPYVPGWDTHGLPIEHRVSQELGDRIKEMSPAEIRKKCEEFALKFVEIQKEEFKRLGVRGDWNNPYITLKPDYEVKILDVFKTLVEQGNVYRSLKPIYWCPRCRTALAEAEIEYHDHRSPSIYVKFRSKDDPNLYIVIWTTTPWTLPANVGIALHPDFEYSVVKVGDERWVIATDLLETFSRETGVDCSEVVEKIRGKDLEGKEFQHPIFEDKTSRVILADYVSLETGTGCVHIAPGHGEEDYVYGHVKYGLPIVSPVDEEGRFTDEAGKYRGMFIEDSNRVIIEDLKEKGILVHASTITHSYPHCWRCKGPVIFRATEQWFISVDHNNLRQRVLEEIDRVKWIPEWGRNRIRSMVEERPDWCISRQRVWGTPIPAVKCKECGEVTLDPKVIEHFMKIVEKEGTNAWFEKDVEELIPDDFRCPKCGARSFEKMLDTLDVWIDSGSSFEYITTREDHPFPLDMYLEGSDQHRGWFHSSIFLAVAKRGSAPYKEVLTHGFIKDELGRKMSKSLGNVVDPMEVVEKYGAEILRLWLASSDYFNDIKISMRIVEQQTEVYKKIRNTFRFLLGNLEDFDPELDRVPYEKLLTIDKWALGRLQEIIKRATEYYDSYEFSKVYNLVVKYCTTELSSLYLDVVKDRLYVEAKDSLYRRSAQTVMHEILIALMKILAPIMTFTMEEVYSHLHEKDRKYKTVQAEYWPEYREDLIDKKIMEDFEKLLSIREDVLKALEEKRQQDVIGHSLDAEVILVPRNDSVKALLEEYRDVLEELFIVSKVSLSDGSGELKGELVEVTAKHAEGEKCQRCWKYTTEISRSEEFPAVCPRCLAVLKGERK.

The short motif at 57-67 (PYANGHIHIGT) is the 'HIGH' region element. E552 contacts L-isoleucyl-5'-AMP. Residues 593 to 597 (KMSKS) carry the 'KMSKS' region motif. K596 contacts ATP. The Zn(2+) site is built by C886, C889, C906, and C909.

It belongs to the class-I aminoacyl-tRNA synthetase family. IleS type 1 subfamily. As to quaternary structure, monomer. The cofactor is Zn(2+).

It localises to the cytoplasm. The catalysed reaction is tRNA(Ile) + L-isoleucine + ATP = L-isoleucyl-tRNA(Ile) + AMP + diphosphate. Functionally, catalyzes the attachment of isoleucine to tRNA(Ile). As IleRS can inadvertently accommodate and process structurally similar amino acids such as valine, to avoid such errors it has two additional distinct tRNA(Ile)-dependent editing activities. One activity is designated as 'pretransfer' editing and involves the hydrolysis of activated Val-AMP. The other activity is designated 'posttransfer' editing and involves deacylation of mischarged Val-tRNA(Ile). In Thermotoga neapolitana (strain ATCC 49049 / DSM 4359 / NBRC 107923 / NS-E), this protein is Isoleucine--tRNA ligase.